The sequence spans 75 residues: MYB-like transcription factor ETC3 (75 aa).

The disordered stretch occupies residues 1-20 (MDNHRRTKQPKTNSIVTSSS). A Myb-like domain is found at 34-71 (SQEEEDLVSRMHKLVGDRWELIAGRIPGRTAGEIERFW).

As to expression, expressed in leaf epidermal cells, stomate guard cells in leaves, cotyledons and hypocotyls, inflorescences, developing seeds and siliques.

Its subcellular location is the nucleus. Functionally, MYB-type transcription factor involved in epidermal cell fate specification. Acts as a negative regulator of trichome development, including endoreplication, by mediating lateral inhibition. Promotes the formation of hair developing cells in H position in root epidermis, probably by inhibiting non-hair cell formation. May have pleiotropic effects on flowering development and epidermal cell size through the regulation of endoreduplication. This Arabidopsis thaliana (Mouse-ear cress) protein is MYB-like transcription factor ETC3 (ETC3).